Consider the following 105-residue polypeptide: Nucleoid-associated protein SaurJH1_0513 (105 aa).

A disordered region spans residues 1–33 (MRGGGNMQQMMKQMQKMQKKMAQEQKKLKEERI). Over residues 7 to 16 (MQQMMKQMQK) the composition is skewed to low complexity. Over residues 21-33 (MAQEQKKLKEERI) the composition is skewed to basic and acidic residues.

Belongs to the YbaB/EbfC family. Homodimer.

It is found in the cytoplasm. It localises to the nucleoid. Functionally, binds to DNA and alters its conformation. May be involved in regulation of gene expression, nucleoid organization and DNA protection. This is Nucleoid-associated protein SaurJH1_0513 from Staphylococcus aureus (strain JH1).